The primary structure comprises 216 residues: DNA gyrase subunit B (216 aa).

The Toprim domain maps to 140-216; sequence SELYLVEGDS…PDKLRYHKII (77 aa).

Belongs to the type II topoisomerase GyrB family. In terms of assembly, heterotetramer, composed of two GyrA and two GyrB chains. In the heterotetramer, GyrA contains the active site tyrosine that forms a transient covalent intermediate with DNA, while GyrB binds cofactors and catalyzes ATP hydrolysis.

Its subcellular location is the cytoplasm. The enzyme catalyses ATP-dependent breakage, passage and rejoining of double-stranded DNA.. In terms of biological role, a type II topoisomerase that negatively supercoils closed circular double-stranded (ds) DNA in an ATP-dependent manner to modulate DNA topology and maintain chromosomes in an underwound state. Negative supercoiling favors strand separation, and DNA replication, transcription, recombination and repair, all of which involve strand separation. Also able to catalyze the interconversion of other topological isomers of dsDNA rings, including catenanes and knotted rings. Type II topoisomerases break and join 2 DNA strands simultaneously in an ATP-dependent manner. The protein is DNA gyrase subunit B (gyrB) of Acinetobacter sp. (strain ATCC 33308 / BD413 ErpE27).